A 214-amino-acid polypeptide reads, in one-letter code: Holliday junction branch migration complex subunit RuvA (214 aa).

The segment at 1 to 68 is domain I; that stretch reads MIGFLQGKVL…QPKPVLIGFD (68 aa). The tract at residues 69–146 is domain II; that stretch reads SAEEKDFFQL…RFLLAADEAG (78 aa). The flexible linker stretch occupies residues 147-160; the sequence is AGDGVSKTGTPSLP. Residues 161–214 are domain III; it reads IQKAIDQVVDVLVQQLGHTPSAAKMMVAQALDRDPEIMTPEALFDEVYKGDVDA.

Belongs to the RuvA family. As to quaternary structure, homotetramer. Forms an RuvA(8)-RuvB(12)-Holliday junction (HJ) complex. HJ DNA is sandwiched between 2 RuvA tetramers; dsDNA enters through RuvA and exits via RuvB. An RuvB hexamer assembles on each DNA strand where it exits the tetramer. Each RuvB hexamer is contacted by two RuvA subunits (via domain III) on 2 adjacent RuvB subunits; this complex drives branch migration. In the full resolvosome a probable DNA-RuvA(4)-RuvB(12)-RuvC(2) complex forms which resolves the HJ.

It is found in the cytoplasm. The RuvA-RuvB-RuvC complex processes Holliday junction (HJ) DNA during genetic recombination and DNA repair, while the RuvA-RuvB complex plays an important role in the rescue of blocked DNA replication forks via replication fork reversal (RFR). RuvA specifically binds to HJ cruciform DNA, conferring on it an open structure. The RuvB hexamer acts as an ATP-dependent pump, pulling dsDNA into and through the RuvAB complex. HJ branch migration allows RuvC to scan DNA until it finds its consensus sequence, where it cleaves and resolves the cruciform DNA. This is Holliday junction branch migration complex subunit RuvA from Desulforapulum autotrophicum (strain ATCC 43914 / DSM 3382 / VKM B-1955 / HRM2) (Desulfobacterium autotrophicum).